The sequence spans 225 residues: RNA chaperone ProQ (225 aa).

The interval 107 to 169 is disordered; the sequence is KARVQAQRAA…VAAKAPREER (63 aa). A compositionally biased stretch (low complexity) spans 109–118; that stretch reads RVQAQRAAQQ. Over residues 137 to 146 the composition is skewed to basic residues; the sequence is RERKPRPQQP. Over residues 147–156 the composition is skewed to basic and acidic residues; the sequence is RRKEGAEQRK.

This sequence belongs to the ProQ family.

It is found in the cytoplasm. RNA chaperone with significant RNA binding, RNA strand exchange and RNA duplexing activities. May regulate ProP activity through an RNA-based, post-transcriptional mechanism. In Klebsiella pneumoniae subsp. pneumoniae (strain ATCC 700721 / MGH 78578), this protein is RNA chaperone ProQ.